The primary structure comprises 1369 residues: Mediator of RNA polymerase II transcription subunit 23 (1369 aa).

The disordered stretch occupies residues T1337–Q1369. The segment covering A1341–N1357 has biased composition (pro residues).

This sequence belongs to the Mediator complex subunit 23 family. Component of the Mediator complex.

It localises to the nucleus. Functionally, component of the Mediator complex, a coactivator involved in the regulated transcription of nearly all RNA polymerase II-dependent genes. Mediator functions as a bridge to convey information from gene-specific regulatory proteins to the basal RNA polymerase II transcription machinery. Mediator is recruited to promoters by direct interactions with regulatory proteins and serves as a scaffold for the assembly of a functional preinitiation complex with RNA polymerase II and the general transcription factors. This Xenopus laevis (African clawed frog) protein is Mediator of RNA polymerase II transcription subunit 23 (med23).